The sequence spans 152 residues: UPF0178 protein YaiI (152 aa).

Belongs to the UPF0178 family.

The chain is UPF0178 protein YaiI from Shigella flexneri.